The chain runs to 100 residues: Nucleoid-associated protein Caur_0522 (100 aa).

It belongs to the YbaB/EbfC family. Homodimer.

The protein resides in the cytoplasm. Its subcellular location is the nucleoid. Binds to DNA and alters its conformation. May be involved in regulation of gene expression, nucleoid organization and DNA protection. The chain is Nucleoid-associated protein Caur_0522 from Chloroflexus aurantiacus (strain ATCC 29366 / DSM 635 / J-10-fl).